Reading from the N-terminus, the 364-residue chain is Fructose-bisphosphate aldolase A (364 aa).

A Phosphotyrosine modification is found at Tyr5. Position 9 is a phosphothreonine (Thr9). 2 positions are modified to phosphoserine: Ser36 and Ser39. Lys42 is subject to N6-acetyllysine; alternate. Residue Lys42 forms a Glycyl lysine isopeptide (Lys-Gly) (interchain with G-Cter in SUMO1); alternate linkage. A Glycyl lysine isopeptide (Lys-Gly) (interchain with G-Cter in SUMO2); alternate cross-link involves residue Lys42. A beta-D-fructose 1,6-bisphosphate-binding site is contributed by Arg43. At Ser46 the chain carries Phosphoserine. Lys99 is modified (N6-(2-hydroxyisobutyryl)lysine). Position 108 is an N6-acetyllysine (Lys108). At Lys111 the chain carries N6-acetyllysine; alternate. The residue at position 111 (Lys111) is an N6-malonyllysine; alternate. Ser132 carries the post-translational modification Phosphoserine. At Lys147 the chain carries N6-(2-hydroxyisobutyryl)lysine. The active-site Proton acceptor is Glu188. The active-site Schiff-base intermediate with dihydroxyacetone-P is Lys230. Residue Ser272 is modified to Phosphoserine. Beta-D-fructose 1,6-bisphosphate is bound by residues Ser272–Gly274, Ser301, and Arg304. Lys312 carries the post-translational modification N6-malonyllysine. Lys330 bears the N6-acetyllysine mark.

This sequence belongs to the class I fructose-bisphosphate aldolase family. In terms of assembly, homotetramer. Interacts with SNX9 and WAS. Interacts with FBP2; the interaction blocks FBP2 inhibition by physiological concentrations of AMP and reduces inhibition by Ca(2+).

The protein localises to the cytoplasm. The protein resides in the myofibril. Its subcellular location is the sarcomere. It localises to the i band. It is found in the m line. It carries out the reaction beta-D-fructose 1,6-bisphosphate = D-glyceraldehyde 3-phosphate + dihydroxyacetone phosphate. It participates in carbohydrate degradation; glycolysis; D-glyceraldehyde 3-phosphate and glycerone phosphate from D-glucose: step 4/4. In terms of biological role, catalyzes the reversible conversion of beta-D-fructose 1,6-bisphosphate (FBP) into two triose phosphate and plays a key role in glycolysis and gluconeogenesis. In addition, may also function as scaffolding protein. This Pan troglodytes (Chimpanzee) protein is Fructose-bisphosphate aldolase A (ALDOA).